We begin with the raw amino-acid sequence, 471 residues long: UDP-N-acetylmuramoylalanine--D-glutamate ligase (471 aa).

122 to 128 (GTNGKTT) serves as a coordination point for ATP.

Belongs to the MurCDEF family.

It localises to the cytoplasm. The catalysed reaction is UDP-N-acetyl-alpha-D-muramoyl-L-alanine + D-glutamate + ATP = UDP-N-acetyl-alpha-D-muramoyl-L-alanyl-D-glutamate + ADP + phosphate + H(+). It functions in the pathway cell wall biogenesis; peptidoglycan biosynthesis. In terms of biological role, cell wall formation. Catalyzes the addition of glutamate to the nucleotide precursor UDP-N-acetylmuramoyl-L-alanine (UMA). This Streptomyces coelicolor (strain ATCC BAA-471 / A3(2) / M145) protein is UDP-N-acetylmuramoylalanine--D-glutamate ligase.